Reading from the N-terminus, the 287-residue chain is Myoblast determination protein 1 homolog B (287 aa).

Residues 96-147 (DRRRAATMRERRRLSKVNDAFETLKRCTSTNPNQRLPKVDILRNAISYIDSL) enclose the bHLH domain. 2 disordered regions span residues 161–202 (NMEH…FYTD) and 231–277 (QSPS…QLSH). A compositionally biased stretch (low complexity) spans 168 to 188 (DSDASSPSSNCSDGMNSPPCS). The span at 267–277 (SPGNSCTQLSH) shows a compositional bias: polar residues.

As to quaternary structure, efficient DNA binding requires dimerization with another bHLH protein.

The protein resides in the nucleus. In terms of biological role, may act as a transcriptional activator that promotes transcription of muscle-specific target genes and plays a role in muscle differentiation. This Xenopus laevis (African clawed frog) protein is Myoblast determination protein 1 homolog B (myod1-b).